Here is a 138-residue protein sequence, read N- to C-terminus: Putative pre-16S rRNA nuclease (138 aa).

This sequence belongs to the YqgF nuclease family.

Its subcellular location is the cytoplasm. In terms of biological role, could be a nuclease involved in processing of the 5'-end of pre-16S rRNA. The protein is Putative pre-16S rRNA nuclease of Salmonella arizonae (strain ATCC BAA-731 / CDC346-86 / RSK2980).